The chain runs to 218 residues: MICIPVIDENVSDAINSAKEALKYGDIVEFRVDLLNDVTFEDIEKFSKIPSILTIRAEWEGGAWKKSDNERIELLKYAIKNNAKFIDIELKEERNLELVKYRNEIGSKTKIIVSYHDFEKTPEIDELIDVVEKELKIGDIAKFATFAHSKEDTLKILNLMNKYSGKIIAIGMGESGKLTRILGLDFGSILTFASMEGKASAPGQVDVKKLKEILELIE.

Residues 29 to 31 (EFR) and Arg-56 contribute to the 3-dehydroquinate site. His-116 (proton donor/acceptor) is an active-site residue. Lys-142 (schiff-base intermediate with substrate) is an active-site residue. 3 residues coordinate 3-dehydroquinate: Arg-180, Ser-200, and Gln-204.

The protein belongs to the type-I 3-dehydroquinase family. In terms of assembly, homodimer.

It catalyses the reaction 3-dehydroquinate = 3-dehydroshikimate + H2O. The protein operates within metabolic intermediate biosynthesis; chorismate biosynthesis; chorismate from D-erythrose 4-phosphate and phosphoenolpyruvate: step 3/7. In terms of biological role, involved in the third step of the chorismate pathway, which leads to the biosynthesis of aromatic amino acids. Catalyzes the cis-dehydration of 3-dehydroquinate (DHQ) and introduces the first double bond of the aromatic ring to yield 3-dehydroshikimate. The polypeptide is 3-dehydroquinate dehydratase (Methanococcus maripaludis (strain C6 / ATCC BAA-1332)).